The following is a 501-amino-acid chain: Bifunctional purine biosynthesis protein PurH (501 aa).

An MGS-like domain is found at 1–144; sequence MKKRALISVF…KNFKDVVVLS (144 aa).

It belongs to the PurH family.

The enzyme catalyses (6R)-10-formyltetrahydrofolate + 5-amino-1-(5-phospho-beta-D-ribosyl)imidazole-4-carboxamide = 5-formamido-1-(5-phospho-D-ribosyl)imidazole-4-carboxamide + (6S)-5,6,7,8-tetrahydrofolate. The catalysed reaction is IMP + H2O = 5-formamido-1-(5-phospho-D-ribosyl)imidazole-4-carboxamide. It participates in purine metabolism; IMP biosynthesis via de novo pathway; 5-formamido-1-(5-phospho-D-ribosyl)imidazole-4-carboxamide from 5-amino-1-(5-phospho-D-ribosyl)imidazole-4-carboxamide (10-formyl THF route): step 1/1. Its pathway is purine metabolism; IMP biosynthesis via de novo pathway; IMP from 5-formamido-1-(5-phospho-D-ribosyl)imidazole-4-carboxamide: step 1/1. The sequence is that of Bifunctional purine biosynthesis protein PurH from Clostridium perfringens (strain ATCC 13124 / DSM 756 / JCM 1290 / NCIMB 6125 / NCTC 8237 / Type A).